The primary structure comprises 150 residues: MADKFHILLLNGPNINMLGTREPDKYGTLSLAEIVNRLTSEAAALNVSLDHLQSNAEYALIDRIHQAKDNVDYILINPAAFAHTSVAIRDALLAVNIPFIEIHLSNVHAREPFRQHSYLSDVAAGVICGLGADGYSYALQTAVKRLSQSH.

Residue Y26 is the Proton acceptor of the active site. Positions 77, 83, and 90 each coordinate substrate. H103 functions as the Proton donor in the catalytic mechanism. Residues 104–105 (LS) and R114 each bind substrate.

It belongs to the type-II 3-dehydroquinase family. In terms of assembly, homododecamer.

The catalysed reaction is 3-dehydroquinate = 3-dehydroshikimate + H2O. It functions in the pathway metabolic intermediate biosynthesis; chorismate biosynthesis; chorismate from D-erythrose 4-phosphate and phosphoenolpyruvate: step 3/7. Functionally, catalyzes a trans-dehydration via an enolate intermediate. In Klebsiella pneumoniae (strain 342), this protein is 3-dehydroquinate dehydratase.